We begin with the raw amino-acid sequence, 59 residues long: Conotoxin Ts-03 (59 aa).

Positions 1-19 are cleaved as a signal peptide; sequence MRCLPVFIILLLLIPSAAS. Positions 20–47 are excised as a propeptide; sequence VAQPKTKDDVALASFYDNAKRTLQRHWA.

Belongs to the conotoxin T superfamily. Post-translationally, contains 2 disulfide bonds that can be either 'C1-C3, C2-C4' or 'C1-C4, C2-C3', since these disulfide connectivities have been observed for conotoxins with cysteine framework V (for examples, see AC P0DQQ7 and AC P81755). Expressed by the venom duct.

The protein localises to the secreted. This Conus tessulatus (Tessellate cone) protein is Conotoxin Ts-03.